A 275-amino-acid chain; its full sequence is Probable 2' cyclic ADP-D-ribose synthase TcpB (275 aa).

Over residues 17–32 (RLKADDSREMSKEKQA) the composition is skewed to basic and acidic residues. Positions 17–66 (RLKADDSREMSKEKQAQSKAHKAQQAISSAKSLSTQKSKMSELERATRDG) are disordered. Residues 39–48 (AQQAISSAKS) are compositionally biased toward low complexity. The span at 55–64 (KMSELERATR) shows a compositional bias: basic and acidic residues. Positions 142 to 275 (EEYDFFISHA…EIAKELHSLI (134 aa)) constitute a TIR domain. NAD(+)-binding positions include 151–152 (AS) and Lys-181. Glu-217 is a catalytic residue.

As to quaternary structure, homodimer. Interacts with host TIRAP, and probably host MYD88. Interacts with host TLR4, abolishes the interaction of host TIRAP with TLR4.

It is found in the secreted. Its subcellular location is the host cell membrane. The catalysed reaction is NAD(+) + H2O = ADP-D-ribose + nicotinamide + H(+). The enzyme catalyses NAD(+) = 2'cADPR + nicotinamide + H(+). Its function is as follows. Virulence factor that interferes with host Toll-like receptor 2 (TLR2) and TLR4 signaling, resulting in the reduction of dendritic cell maturation, inhibition of pro-inflammatory cytokine secretion and impaired NF-kappa-B activation in macrophages. Binds host lipids. Has NAD(+) hydrolase (NADase) activity, catalyzes cleavage of NAD(+) into ADP-D-ribose (ADPR) and nicotinamide, also generates a cyclization variant of cyclic ADPR (cADPR), termed v-cADPR (probably 2'cADPR). The polypeptide is Probable 2' cyclic ADP-D-ribose synthase TcpB (tcpB) (Brucella melitensis biotype 2 (strain ATCC 23457)).